A 388-amino-acid polypeptide reads, in one-letter code: MTKTAIVRVAMNGITGRMGYRQHLLRSILPIRDAGGFTLEDGTKVQIEPILVGRNEAKIRELAEKHKVAEWSTDLDSVVNDPTVDIIFDASMTSLRAATLKKAMLAGKHIFTEKPTAETLEEAIELARIGKQAGVTAGVVHDKLYLPGLVKLRRLVDEGFFGRILSIRGEFGYWVFEGDVQAAQRPSWNYRKEDGGGMTTDMFCHWNYVLEGIIGKVKSVNAKTATHIPTRWDEAGKEYKATADDASYGIFELETPGGDDVIGQINSSWAVRVYRDELVEFQVDGTHGSAVAGLNKCVAQQRAHTPKPVWNPDLPVTESFRDQWQEVPANAELDNGFKLQWEEFLRDVVAGREHRFGLLSAARGVQLAELGLQSNDERRTIDIPEITL.

Belongs to the Gfo/Idh/MocA family. In terms of assembly, homotetramer. It depends on Zn(2+) as a cofactor.

It catalyses the reaction D-xylose + NADP(+) = D-xylono-1,5-lactone + NADPH + H(+). The catalysed reaction is D-xylose + NAD(+) = D-xylono-1,5-lactone + NADH + H(+). The protein operates within carbohydrate metabolism; D-xylose degradation. Its function is as follows. Catalyzes the NADP(+)-dependent oxidation of D-xylose. Is able to use both NADP(+) and NAD(+); however, the enzyme shows a very strong preference for NADP(+). Is likely involved in the first step of the oxidative D-xylose degradation pathway. This Paenarthrobacter nicotinovorans (Arthrobacter nicotinovorans) protein is D-xylose dehydrogenase (xdh).